The sequence spans 98 residues: uncharacterized protein (98 aa).

A signal peptide spans 1–19 (MTERRRALSLAAVVDSINL). The segment at 40–98 (PPGGSFSGIKRESRRKRPSRNEIYGGGVLEQEVRMRRWSKTASPPVSLHHRPLGPARKP) is disordered. Residues 87–98 (LHHRPLGPARKP) show a composition bias toward basic residues.

This is an uncharacterized protein from Homo sapiens (Human).